The primary structure comprises 341 residues: S-adenosylmethionine:tRNA ribosyltransferase-isomerase (341 aa).

This sequence belongs to the QueA family. As to quaternary structure, monomer.

The protein localises to the cytoplasm. It carries out the reaction 7-aminomethyl-7-carbaguanosine(34) in tRNA + S-adenosyl-L-methionine = epoxyqueuosine(34) in tRNA + adenine + L-methionine + 2 H(+). It functions in the pathway tRNA modification; tRNA-queuosine biosynthesis. Its function is as follows. Transfers and isomerizes the ribose moiety from AdoMet to the 7-aminomethyl group of 7-deazaguanine (preQ1-tRNA) to give epoxyqueuosine (oQ-tRNA). The protein is S-adenosylmethionine:tRNA ribosyltransferase-isomerase of Clostridium perfringens (strain ATCC 13124 / DSM 756 / JCM 1290 / NCIMB 6125 / NCTC 8237 / Type A).